Reading from the N-terminus, the 380-residue chain is Succinyl-diaminopimelate desuccinylase (380 aa).

Histidine 71 is a Zn(2+) binding site. Aspartate 73 is a catalytic residue. Zn(2+) is bound at residue aspartate 104. Glutamate 138 serves as the catalytic Proton acceptor. Residues glutamate 139, glutamate 167, and histidine 353 each coordinate Zn(2+).

It belongs to the peptidase M20A family. DapE subfamily. As to quaternary structure, homodimer. The cofactor is Zn(2+). Co(2+) is required as a cofactor.

It catalyses the reaction N-succinyl-(2S,6S)-2,6-diaminopimelate + H2O = (2S,6S)-2,6-diaminopimelate + succinate. The protein operates within amino-acid biosynthesis; L-lysine biosynthesis via DAP pathway; LL-2,6-diaminopimelate from (S)-tetrahydrodipicolinate (succinylase route): step 3/3. In terms of biological role, catalyzes the hydrolysis of N-succinyl-L,L-diaminopimelic acid (SDAP), forming succinate and LL-2,6-diaminopimelate (DAP), an intermediate involved in the bacterial biosynthesis of lysine and meso-diaminopimelic acid, an essential component of bacterial cell walls. This is Succinyl-diaminopimelate desuccinylase from Shewanella baltica (strain OS185).